The sequence spans 239 residues: tRNA (guanine-N(7)-)-methyltransferase (239 aa).

4 residues coordinate S-adenosyl-L-methionine: E68, E93, D120, and D143. D143 is a catalytic residue. Residues K147, D180, and T217 to E220 each bind substrate.

Belongs to the class I-like SAM-binding methyltransferase superfamily. TrmB family.

It catalyses the reaction guanosine(46) in tRNA + S-adenosyl-L-methionine = N(7)-methylguanosine(46) in tRNA + S-adenosyl-L-homocysteine. The protein operates within tRNA modification; N(7)-methylguanine-tRNA biosynthesis. Its function is as follows. Catalyzes the formation of N(7)-methylguanine at position 46 (m7G46) in tRNA. This is tRNA (guanine-N(7)-)-methyltransferase from Vibrio cholerae serotype O1 (strain ATCC 39541 / Classical Ogawa 395 / O395).